Here is a 271-residue protein sequence, read N- to C-terminus: 5-amino-6-(5-phospho-D-ribitylamino)uracil phosphatase YbjI (271 aa).

Aspartate 9 acts as the Nucleophile in catalysis. Mg(2+) is bound at residue aspartate 9. Position 10 (methionine 10) interacts with phosphate. Mg(2+) is bound at residue aspartate 11. Residues 44-45 (SG) and lysine 192 each bind phosphate. Aspartate 215 is a binding site for Mg(2+). Asparagine 218 serves as a coordination point for phosphate.

It belongs to the HAD-like hydrolase superfamily. Cof family. Mg(2+) serves as cofactor. It depends on Mn(2+) as a cofactor. Co(2+) is required as a cofactor. Requires Zn(2+) as cofactor.

It catalyses the reaction 5-amino-6-(5-phospho-D-ribitylamino)uracil + H2O = 5-amino-6-(D-ribitylamino)uracil + phosphate. The protein operates within cofactor biosynthesis; riboflavin biosynthesis; 5-amino-6-(D-ribitylamino)uracil from GTP: step 4/4. Catalyzes the dephosphorylation of 5-amino-6-(5-phospho-D-ribitylamino)uracil, and thus could be involved in the riboflavin biosynthesis pathway. Is also able to dephosphorylate flavin mononucleotide (FMN), erythrose 4-phosphate and other phosphoric acid esters. The polypeptide is 5-amino-6-(5-phospho-D-ribitylamino)uracil phosphatase YbjI (ybjI) (Escherichia coli (strain K12)).